The following is a 246-amino-acid chain: Zinc import ATP-binding protein ZnuC (246 aa).

The region spanning 24–244 is the ABC transporter domain; it reads LKIENLALAY…TLGEIFSSYI (221 aa). 56-63 contributes to the ATP binding site; sequence GPNGGGKT.

This sequence belongs to the ABC transporter superfamily. Zinc importer (TC 3.A.1.15.5) family. As to quaternary structure, the complex is composed of two ATP-binding proteins (ZnuC), two transmembrane proteins (ZnuB) and a solute-binding protein (ZnuA).

It localises to the cell membrane. It carries out the reaction Zn(2+)(out) + ATP(in) + H2O(in) = Zn(2+)(in) + ADP(in) + phosphate(in) + H(+)(in). Part of the ABC transporter complex ZnuABC involved in zinc import. Responsible for energy coupling to the transport system. This chain is Zinc import ATP-binding protein ZnuC, found in Wolbachia sp. subsp. Brugia malayi (strain TRS).